A 258-amino-acid chain; its full sequence is Probable splicing factor, arginine/serine-rich 3 (258 aa).

The RRM 1 domain occupies 9–83; sequence QKVYVGNLPG…RRIRVEFTRG (75 aa). Disordered stretches follow at residues 81–120 and 190–258; these read TRGV…PQRR and AYIR…PSPQ. Over residues 97 to 107 the composition is skewed to basic and acidic residues; it reads GGDHRGGDFRG. The span at 108–117 shows a compositional bias: gly residues; that stretch reads GRGGGRGGGP. The region spanning 123 to 197 is the RRM 2 domain; that stretch reads YRVIVEGLPP…ETAYIRVRED (75 aa). Basic and acidic residues predominate over residues 208-223; that stretch reads GRDRSRSRSPRAERRA. Over residues 228-246 the composition is skewed to basic residues; it reads SPRRSRSRSRSRSRSRSRS. Residues 247–258 are compositionally biased toward low complexity; sequence ASRSPSRSPSPQ.

The protein belongs to the splicing factor SR family. As to quaternary structure, interacts with spk-1. Post-translationally, directly phosphorylated by spk-1 in vitro on serine residues of the RS domain. In terms of tissue distribution, predominantly coexpressed with spk-1 in adult hermaphrodite germlines.

Its subcellular location is the nucleus. Functionally, plays an essential role in embryogenesis. The polypeptide is Probable splicing factor, arginine/serine-rich 3 (rsp-3) (Caenorhabditis elegans).